We begin with the raw amino-acid sequence, 1342 residues long: WD repeat-containing protein 19 (1342 aa).

6 WD repeats span residues 11–51 (TWLG…RSEI), 52–92 (NLPG…TSQL), 95–134 (GMRD…KIPV), 137–175 (KHTK…IRQT), 273–311 (NHKD…DMYV), and 317–356 (EENK…LGDA). 6 TPR repeats span residues 736–769 (AQDL…AKHL), 775–808 (PFIS…DNKE), 840–873 (RVLK…DKAA), 895–928 (PKIH…QSVI), 951–984 (LDGA…NEAF), and 1020–1053 (EKRY…EDNV).

Component of the IFT complex A (IFT-A) complex. IFT-A complex is divided into a core subcomplex composed of IFT122:IFT140:WDR19 which is associated with TULP3 and a peripheral subcomplex composed of IFT43:WDR35:TTC21B. Interacts (via C-terminal region) with IFT122 (via C-terminal region). Interacts with BBS1. Interacts with TTC25. As to expression, some isoforms are tissue-specific. Highly expressed in the prostate. Lower expression in the cerebellum, pituitary gland, fetal lung, and pancreas. In normal prostate, expressed in both basal and luminal epithelial cells. No expression detected in fibromuscular stromal cells, endothelial cells, or infiltrating lymphocytes. Uniformed expression in prostate adenocarcinoma cells.

The protein resides in the cell projection. It is found in the cilium. The protein localises to the cytoplasm. It localises to the cytoskeleton. Its subcellular location is the cilium basal body. The protein resides in the photoreceptor outer segment. It is found in the flagellum. Functionally, as component of the IFT complex A (IFT-A), a complex required for retrograde ciliary transport and entry into cilia of G protein-coupled receptors (GPCRs), it is involved in cilia function and/or assembly. Essential for functional IFT-A assembly and ciliary entry of GPCRs. Associates with the BBSome complex to mediate ciliary transport. In Homo sapiens (Human), this protein is WD repeat-containing protein 19.